A 224-amino-acid polypeptide reads, in one-letter code: Deoxyribose-phosphate aldolase (224 aa).

Asp92 (proton donor/acceptor) is an active-site residue. The active-site Schiff-base intermediate with acetaldehyde is Lys154. Lys183 serves as the catalytic Proton donor/acceptor.

This sequence belongs to the DeoC/FbaB aldolase family. DeoC type 1 subfamily.

The protein resides in the cytoplasm. It catalyses the reaction 2-deoxy-D-ribose 5-phosphate = D-glyceraldehyde 3-phosphate + acetaldehyde. Its pathway is carbohydrate degradation; 2-deoxy-D-ribose 1-phosphate degradation; D-glyceraldehyde 3-phosphate and acetaldehyde from 2-deoxy-alpha-D-ribose 1-phosphate: step 2/2. Its function is as follows. Catalyzes a reversible aldol reaction between acetaldehyde and D-glyceraldehyde 3-phosphate to generate 2-deoxy-D-ribose 5-phosphate. The chain is Deoxyribose-phosphate aldolase from Mannheimia succiniciproducens (strain KCTC 0769BP / MBEL55E).